The chain runs to 410 residues: Histone-lysine N-methyltransferase SUV39H2 (410 aa).

The Chromo domain maps to 47-105; that stretch reads YEVEYLCDYKVVKDMEYYLVKWKGWPDSTNTWEPLQNLKCPLLLQQFSNDKHNYLSQVK. One can recognise a Pre-SET domain in the interval 189 to 247; that stretch reads FGCSCTDCFFQKCCPAEAGVLLAYNKNQQIKIPPGTPIYECNSRCQCGPDCPNRIVQKG. Cysteine 191, cysteine 193, cysteine 196, cysteine 201, cysteine 202, cysteine 229, cysteine 233, cysteine 235, and cysteine 239 together coordinate Zn(2+). An SET domain is found at 250–373; that stretch reads YSLCIFRTSN…AGEELTFDYQ (124 aa). S-adenosyl-L-methionine-binding positions include 261-263 and 330-331; these read RGW and NH. Position 333 (cysteine 333) interacts with Zn(2+). Tyrosine 372 contributes to the S-adenosyl-L-methionine binding site. Phosphoserine is present on residues serine 381, serine 384, and serine 388. Residues 394 to 410 form the Post-SET domain; the sequence is VRTVCKCGAVTCRGYLN. Cysteine 398 provides a ligand contact to Zn(2+). Residue lysine 399 coordinates S-adenosyl-L-methionine. 2 residues coordinate Zn(2+): cysteine 400 and cysteine 405.

Belongs to the class V-like SAM-binding methyltransferase superfamily. Histone-lysine methyltransferase family. Suvar3-9 subfamily. As to quaternary structure, interacts with SMAD5. The large PER complex involved in the histone methylation is composed of at least PER2, CBX3, TRIM28, SUV39H1 and/or SUV39H2; CBX3 mediates the formation of the complex. In terms of processing, ubiquitinated by the DCX(DCAF13) E3 ubiquitin ligase complex, leading to its degradation.

It localises to the nucleus. It is found in the chromosome. Its subcellular location is the centromere. It catalyses the reaction L-lysyl(9)-[histone H3] + 3 S-adenosyl-L-methionine = N(6),N(6),N(6)-trimethyl-L-lysyl(9)-[histone H3] + 3 S-adenosyl-L-homocysteine + 3 H(+). Histone methyltransferase that specifically trimethylates 'Lys-9' of histone H3 using monomethylated H3 'Lys-9' as substrate. H3 'Lys-9' trimethylation represents a specific tag for epigenetic transcriptional repression by recruiting HP1 (CBX1, CBX3 and/or CBX5) proteins to methylated histones. Mainly functions in heterochromatin regions, thereby playing a central role in the establishment of constitutive heterochromatin at pericentric and telomere regions. H3 'Lys-9' trimethylation is also required to direct DNA methylation at pericentric repeats. SUV39H1 is targeted to histone H3 via its interaction with RB1 and is involved in many processes, such as cell cycle regulation, transcriptional repression and regulation of telomere length. May participate in regulation of higher-order chromatin organization during spermatogenesis. Recruited by the large PER complex to the E-box elements of the circadian target genes such as PER2 itself or PER1, contributes to the conversion of local chromatin to a heterochromatin-like repressive state through H3 'Lys-9' trimethylation. The sequence is that of Histone-lysine N-methyltransferase SUV39H2 (SUV39H2) from Homo sapiens (Human).